The sequence spans 247 residues: Ribosomal RNA large subunit methyltransferase E (247 aa).

Residues glycine 99, tryptophan 101, aspartate 123, aspartate 139, and aspartate 162 each contribute to the S-adenosyl-L-methionine site. The active-site Proton acceptor is lysine 202.

This sequence belongs to the class I-like SAM-binding methyltransferase superfamily. RNA methyltransferase RlmE family.

Its subcellular location is the cytoplasm. The catalysed reaction is uridine(2552) in 23S rRNA + S-adenosyl-L-methionine = 2'-O-methyluridine(2552) in 23S rRNA + S-adenosyl-L-homocysteine + H(+). Its function is as follows. Specifically methylates the uridine in position 2552 of 23S rRNA at the 2'-O position of the ribose in the fully assembled 50S ribosomal subunit. The protein is Ribosomal RNA large subunit methyltransferase E of Anaplasma phagocytophilum (strain HZ).